The chain runs to 1210 residues: ATP-dependent helicase/nuclease subunit A (1210 aa).

In terms of domain architecture, UvrD-like helicase ATP-binding spans 27 to 483; that stretch reads QKRTAQQIEA…ILLKENFRSQ (457 aa). Residue 48–55 coordinates ATP; sequence ASAGSGKT. Positions 512-798 constitute a UvrD-like helicase C-terminal domain; it reads QLIAGSHAQT…NLMTIHKSKG (287 aa).

It belongs to the helicase family. AddA subfamily. In terms of assembly, heterodimer of AddA and AddB/RexB. Requires Mg(2+) as cofactor.

The catalysed reaction is Couples ATP hydrolysis with the unwinding of duplex DNA by translocating in the 3'-5' direction.. It catalyses the reaction ATP + H2O = ADP + phosphate + H(+). In terms of biological role, the heterodimer acts as both an ATP-dependent DNA helicase and an ATP-dependent, dual-direction single-stranded exonuclease. Recognizes the chi site generating a DNA molecule suitable for the initiation of homologous recombination. The AddA nuclease domain is required for chi fragment generation; this subunit has the helicase and 3' -&gt; 5' nuclease activities. The polypeptide is ATP-dependent helicase/nuclease subunit A (Streptococcus pyogenes serotype M5 (strain Manfredo)).